We begin with the raw amino-acid sequence, 531 residues long: Ultra-long-chain fatty acid omega-hydroxylase (531 aa).

At 1–22 (MLPITDRLLHLLGLEKTAFRIY) the chain is on the lumenal side. The chain crosses the membrane as a helical span at residues 23 to 43 (AVSTLLLFLLFFLFRLLLRFL). At 44-531 (RLCRSFYITC…LKVEPLPPRA (488 aa)) the chain is on the cytoplasmic side. 2 residues coordinate heme: E335 and C475.

The protein belongs to the cytochrome P450 family. Heme is required as a cofactor.

The protein localises to the endoplasmic reticulum membrane. Its subcellular location is the microsome membrane. The catalysed reaction is triacontanoate + reduced [NADPH--hemoprotein reductase] + O2 = omega-hydroxy-triacontanoate + oxidized [NADPH--hemoprotein reductase] + H2O + H(+). It carries out the reaction an omega-methyl-ultra-long-chain fatty acid + reduced [NADPH--hemoprotein reductase] + O2 = an omega-hydroxy-ultra-long-chain fatty acid + oxidized [NADPH--hemoprotein reductase] + H2O + H(+). In terms of biological role, a cytochrome P450 monooxygenase involved in epidermal ceramide biosynthesis. Hydroxylates the terminal carbon (omega-hydroxylation) of ultra-long-chain fatty acyls (C28-C36) prior to ceramide synthesis. Contributes to the synthesis of three classes of omega-hydroxy-ultra-long chain fatty acylceramides having sphingosine, 6-hydroxysphingosine and phytosphingosine bases, all major lipid components that underlie the permeability barrier of the stratum corneum. Mechanistically, uses molecular oxygen inserting one oxygen atom into a substrate, and reducing the second into a water molecule, with two electrons provided by NADPH via cytochrome P450 reductase (CPR; NADPH-ferrihemoprotein reductase). The sequence is that of Ultra-long-chain fatty acid omega-hydroxylase from Homo sapiens (Human).